The sequence spans 249 residues: 23S rRNA (guanosine-2'-O-)-methyltransferase RlmB (249 aa).

S-adenosyl-L-methionine is bound by residues glycine 197, isoleucine 217, and leucine 226.

This sequence belongs to the class IV-like SAM-binding methyltransferase superfamily. RNA methyltransferase TrmH family. RlmB subfamily.

The protein resides in the cytoplasm. It carries out the reaction guanosine(2251) in 23S rRNA + S-adenosyl-L-methionine = 2'-O-methylguanosine(2251) in 23S rRNA + S-adenosyl-L-homocysteine + H(+). Functionally, specifically methylates the ribose of guanosine 2251 in 23S rRNA. The chain is 23S rRNA (guanosine-2'-O-)-methyltransferase RlmB from Ralstonia nicotianae (strain ATCC BAA-1114 / GMI1000) (Ralstonia solanacearum).